Reading from the N-terminus, the 1436-residue chain is DNA polymerase III PolC-type (1436 aa).

Residues 420–576 form the Exonuclease domain; that stretch reads YVVFDVETTG…YDTEATAYIF (157 aa).

This sequence belongs to the DNA polymerase type-C family. PolC subfamily.

The protein resides in the cytoplasm. It catalyses the reaction DNA(n) + a 2'-deoxyribonucleoside 5'-triphosphate = DNA(n+1) + diphosphate. Functionally, required for replicative DNA synthesis. This DNA polymerase also exhibits 3' to 5' exonuclease activity. The protein is DNA polymerase III PolC-type of Staphylococcus aureus (strain MW2).